The primary structure comprises 81 residues: Photosystem I iron-sulfur center (81 aa).

2 4Fe-4S ferredoxin-type domains span residues 2 to 31 (AHSV…MVPR) and 39 to 68 (IASA…VRVY). Residues C11, C14, C17, C21, C48, C51, C54, and C58 each contribute to the [4Fe-4S] cluster site.

The eukaryotic PSI reaction center is composed of at least 11 subunits. [4Fe-4S] cluster is required as a cofactor.

The protein localises to the plastid. It localises to the chloroplast thylakoid membrane. It catalyses the reaction reduced [plastocyanin] + hnu + oxidized [2Fe-2S]-[ferredoxin] = oxidized [plastocyanin] + reduced [2Fe-2S]-[ferredoxin]. In terms of biological role, apoprotein for the two 4Fe-4S centers FA and FB of photosystem I (PSI); essential for photochemical activity. FB is the terminal electron acceptor of PSI, donating electrons to ferredoxin. The C-terminus interacts with PsaA/B/D and helps assemble the protein into the PSI complex. Required for binding of PsaD and PsaE to PSI. PSI is a plastocyanin/cytochrome c6-ferredoxin oxidoreductase, converting photonic excitation into a charge separation, which transfers an electron from the donor P700 chlorophyll pair to the spectroscopically characterized acceptors A0, A1, FX, FA and FB in turn. The protein is Photosystem I iron-sulfur center of Antithamnion sp. (Red alga).